The following is a 130-amino-acid chain: Small ribosomal subunit protein uS8 (130 aa).

Belongs to the universal ribosomal protein uS8 family. In terms of assembly, part of the 30S ribosomal subunit.

Functionally, one of the primary rRNA binding proteins, it binds directly to 16S rRNA central domain where it helps coordinate assembly of the platform of the 30S subunit. The polypeptide is Small ribosomal subunit protein uS8 (Pyrobaculum neutrophilum (strain DSM 2338 / JCM 9278 / NBRC 100436 / V24Sta) (Thermoproteus neutrophilus)).